We begin with the raw amino-acid sequence, 764 residues long: Phosphoribosylformylglycinamidine synthase subunit PurL (764 aa).

Positions 1-23 (MTQEVDTVERAAATPDHPQPYRE) are disordered. The active site involves H57. ATP is bound by residues Y60 and K104. Residue E106 coordinates Mg(2+). Residues 107–110 (SHNH) and R129 contribute to the substrate site. H108 acts as the Proton acceptor in catalysis. Mg(2+) is bound at residue D130. Q258 lines the substrate pocket. D286 provides a ligand contact to Mg(2+). 330–332 (ESQ) contributes to the substrate binding site. Residues N518 and G555 each coordinate ATP. A Mg(2+)-binding site is contributed by N556. S558 serves as a coordination point for substrate.

This sequence belongs to the FGAMS family. In terms of assembly, monomer. Part of the FGAM synthase complex composed of 1 PurL, 1 PurQ and 2 PurS subunits.

It is found in the cytoplasm. The catalysed reaction is N(2)-formyl-N(1)-(5-phospho-beta-D-ribosyl)glycinamide + L-glutamine + ATP + H2O = 2-formamido-N(1)-(5-O-phospho-beta-D-ribosyl)acetamidine + L-glutamate + ADP + phosphate + H(+). It participates in purine metabolism; IMP biosynthesis via de novo pathway; 5-amino-1-(5-phospho-D-ribosyl)imidazole from N(2)-formyl-N(1)-(5-phospho-D-ribosyl)glycinamide: step 1/2. In terms of biological role, part of the phosphoribosylformylglycinamidine synthase complex involved in the purines biosynthetic pathway. Catalyzes the ATP-dependent conversion of formylglycinamide ribonucleotide (FGAR) and glutamine to yield formylglycinamidine ribonucleotide (FGAM) and glutamate. The FGAM synthase complex is composed of three subunits. PurQ produces an ammonia molecule by converting glutamine to glutamate. PurL transfers the ammonia molecule to FGAR to form FGAM in an ATP-dependent manner. PurS interacts with PurQ and PurL and is thought to assist in the transfer of the ammonia molecule from PurQ to PurL. The chain is Phosphoribosylformylglycinamidine synthase subunit PurL from Mycolicibacterium vanbaalenii (strain DSM 7251 / JCM 13017 / BCRC 16820 / KCTC 9966 / NRRL B-24157 / PYR-1) (Mycobacterium vanbaalenii).